The sequence spans 114 residues: uncharacterized protein (114 aa).

The HIT domain occupies 6–114 (IFKNIIQRKI…LGGKKLKSFS (109 aa)).

This is an uncharacterized protein from Buchnera aphidicola subsp. Acyrthosiphon pisum (strain APS) (Acyrthosiphon pisum symbiotic bacterium).